Reading from the N-terminus, the 416-residue chain is Protein-glutamine gamma-glutamyltransferase (416 aa).

Residues 1–29 (MHKRRRLLAFATVGAVICTAGFTPSVSQA) constitute a signal peptide (tat-type signal). Positions 30–85 (ASSGDGEEKGSYAETHGLTADDVESINALNERALTLGQPGKPPKELPPSASAPSRA) are excised as a propeptide. The tract at residues 64–103 (TLGQPGKPPKELPPSASAPSRAPSDDRETPPAEPLDRMPE) is disordered. Residues 76 to 85 (PPSASAPSRA) show a composition bias toward low complexity. Residues 86–103 (PSDDRETPPAEPLDRMPE) are compositionally biased toward basic and acidic residues. Cys-149 is a catalytic residue. The tract at residues 290-331 (GQDQRGSSDKRKYGDPEAFRPDQGTGLVDMSKDRSIPRSPAK) is disordered. Residues 295–309 (GSSDKRKYGDPEAFR) are compositionally biased toward basic and acidic residues. Active-site residues include Asp-340 and His-359.

Belongs to the bacterial TGase family. Predicted to be exported by the Tat system. The position of the signal peptide cleavage has not been experimentally proven.

It catalyses the reaction L-glutaminyl-[protein] + L-lysyl-[protein] = [protein]-L-lysyl-N(6)-5-L-glutamyl-[protein] + NH4(+). Functionally, catalyzes the cross-linking of proteins and the conjugation of polyamines to proteins. The sequence is that of Protein-glutamine gamma-glutamyltransferase from Streptomyces cinnamoneus (Streptoverticillium cinnamoneum).